Consider the following 798-residue polypeptide: Translation initiation factor IF-2 (798 aa).

The segment at S40–P207 is disordered. A compositionally biased stretch (low complexity) spans N57–N186. Positions R187–K196 are enriched in basic residues. Residues T300–K469 form the tr-type G domain. A G1 region spans residues G309 to T316. Position 309-316 (G309–T316) interacts with GTP. The segment at G334–H338 is G2. Residues D355 to G358 are G3. Residues D355 to H359 and N409 to D412 contribute to the GTP site. A G4 region spans residues N409 to D412. The tract at residues S445–K447 is G5.

This sequence belongs to the TRAFAC class translation factor GTPase superfamily. Classic translation factor GTPase family. IF-2 subfamily.

The protein localises to the cytoplasm. Its function is as follows. One of the essential components for the initiation of protein synthesis. Protects formylmethionyl-tRNA from spontaneous hydrolysis and promotes its binding to the 30S ribosomal subunits. Also involved in the hydrolysis of GTP during the formation of the 70S ribosomal complex. This is Translation initiation factor IF-2 from Enterococcus faecalis (strain ATCC 700802 / V583).